Consider the following 252-residue polypeptide: MILHAQAKHGKPGLPWLVFLHGFSGDCHEWQEVGEAFADYSRLYVDLPGHGGSAAISVDGFDDVTDLLRKTLVSYNILDFWLVGYSLGGRVAMMAACQGLAGLCGVIVEGGHPGLQNAEQRAERQRSDRQWVQRFLTEPLTAVFADWYQQPVFASLNDDQRRELVALRSNNNGATLAAMLEATSLAVQPDLRANLSARTFAFYYLCGERDSKFRALAAELAADCHVIPRAGHNAHRENPAGVIASLAQILRF.

Belongs to the AB hydrolase superfamily. MenH family. In terms of assembly, monomer.

The catalysed reaction is 5-enolpyruvoyl-6-hydroxy-2-succinyl-cyclohex-3-ene-1-carboxylate = (1R,6R)-6-hydroxy-2-succinyl-cyclohexa-2,4-diene-1-carboxylate + pyruvate. Its pathway is quinol/quinone metabolism; 1,4-dihydroxy-2-naphthoate biosynthesis; 1,4-dihydroxy-2-naphthoate from chorismate: step 3/7. It participates in quinol/quinone metabolism; menaquinone biosynthesis. In terms of biological role, catalyzes a proton abstraction reaction that results in 2,5-elimination of pyruvate from 2-succinyl-5-enolpyruvyl-6-hydroxy-3-cyclohexene-1-carboxylate (SEPHCHC) and the formation of 2-succinyl-6-hydroxy-2,4-cyclohexadiene-1-carboxylate (SHCHC). The polypeptide is 2-succinyl-6-hydroxy-2,4-cyclohexadiene-1-carboxylate synthase (Escherichia coli (strain K12 / MC4100 / BW2952)).